Here is a 300-residue protein sequence, read N- to C-terminus: Ribosomal RNA small subunit methyltransferase H (300 aa).

Residues 46–48, Asp65, Phe92, Asp107, and Gln114 each bind S-adenosyl-L-methionine; that span reads GGH.

Belongs to the methyltransferase superfamily. RsmH family.

It is found in the cytoplasm. It carries out the reaction cytidine(1402) in 16S rRNA + S-adenosyl-L-methionine = N(4)-methylcytidine(1402) in 16S rRNA + S-adenosyl-L-homocysteine + H(+). In terms of biological role, specifically methylates the N4 position of cytidine in position 1402 (C1402) of 16S rRNA. The chain is Ribosomal RNA small subunit methyltransferase H from Prochlorococcus marinus (strain MIT 9301).